The sequence spans 511 residues: Colicin-B (511 aa).

The TonB box motif lies at 17 to 24 (DTMVVWPS). 2 helical membrane-spanning segments follow: residues 455–475 (MASAVALSLFSLTLGSALIAF) and 477–497 (LSATVVGFVGVVIAGAIGAFI).

This sequence belongs to the channel forming colicin family.

Its subcellular location is the cell membrane. Functionally, this colicin is a channel-forming colicin. This class of transmembrane toxins depolarize the cytoplasmic membrane, leading to dissipation of cellular energy. Its function is as follows. Colicins are polypeptide toxins produced by and active against E.coli and closely related bacteria. This Escherichia coli protein is Colicin-B (cba).